Here is a 246-residue protein sequence, read N- to C-terminus: Small ribosomal subunit protein uS2 (246 aa).

This sequence belongs to the universal ribosomal protein uS2 family.

This Azotobacter vinelandii (strain DJ / ATCC BAA-1303) protein is Small ribosomal subunit protein uS2.